A 165-amino-acid polypeptide reads, in one-letter code: Peptide methionine sulfoxide reductase MsrA (165 aa).

Residue Cys10 is part of the active site.

This sequence belongs to the MsrA Met sulfoxide reductase family.

The enzyme catalyses L-methionyl-[protein] + [thioredoxin]-disulfide + H2O = L-methionyl-(S)-S-oxide-[protein] + [thioredoxin]-dithiol. The catalysed reaction is [thioredoxin]-disulfide + L-methionine + H2O = L-methionine (S)-S-oxide + [thioredoxin]-dithiol. Has an important function as a repair enzyme for proteins that have been inactivated by oxidation. Catalyzes the reversible oxidation-reduction of methionine sulfoxide in proteins to methionine. The chain is Peptide methionine sulfoxide reductase MsrA from Campylobacter jejuni subsp. jejuni serotype O:23/36 (strain 81-176).